A 308-amino-acid chain; its full sequence is Probable GTP 3',8-cyclase (308 aa).

The Radical SAM core domain maps to 4-224 (RFGRPLEDLR…QIRKKHFRPR (221 aa)). Arg-13 contacts GTP. Positions 20, 24, and 27 each coordinate [4Fe-4S] cluster. A GTP-binding site is contributed by Lys-60. Gly-64 serves as a coordination point for S-adenosyl-L-methionine. Thr-90 lines the GTP pocket. Ser-114 lines the S-adenosyl-L-methionine pocket. Lys-151 contacts GTP. [4Fe-4S] cluster contacts are provided by Cys-245 and Cys-248. 250-252 (RIR) contacts GTP. Cys-262 is a [4Fe-4S] cluster binding site.

It belongs to the radical SAM superfamily. MoaA family. Requires [4Fe-4S] cluster as cofactor.

It catalyses the reaction GTP + AH2 + S-adenosyl-L-methionine = (8S)-3',8-cyclo-7,8-dihydroguanosine 5'-triphosphate + 5'-deoxyadenosine + L-methionine + A + H(+). It functions in the pathway cofactor biosynthesis; molybdopterin biosynthesis. Catalyzes the cyclization of GTP to (8S)-3',8-cyclo-7,8-dihydroguanosine 5'-triphosphate. This Saccharolobus islandicus (strain Y.N.15.51 / Yellowstone #2) (Sulfolobus islandicus) protein is Probable GTP 3',8-cyclase.